Consider the following 649-residue polypeptide: tRNA-guanine(15) transglycosylase (649 aa).

The active-site Nucleophile is D88. Positions 123 and 194 each coordinate substrate. Zn(2+) contacts are provided by C280, C282, and C285. Positions 573-648 constitute a PUA domain; sequence KYRIVIDSSV…VAATLRGGLK (76 aa).

The protein belongs to the archaeosine tRNA-ribosyltransferase family. Zn(2+) serves as cofactor.

It catalyses the reaction guanosine(15) in tRNA + 7-cyano-7-deazaguanine = 7-cyano-7-carbaguanosine(15) in tRNA + guanine. It functions in the pathway tRNA modification; archaeosine-tRNA biosynthesis. Functionally, exchanges the guanine residue with 7-cyano-7-deazaguanine (preQ0) at position 15 in the dihydrouridine loop (D-loop) of archaeal tRNAs. The chain is tRNA-guanine(15) transglycosylase from Methanococcus maripaludis (strain DSM 14266 / JCM 13030 / NBRC 101832 / S2 / LL).